Consider the following 468-residue polypeptide: Alpha-N-acetylgalactosaminidase (468 aa).

Positions 1–30 form a signal peptide, tat-type signal; the sequence is MENTRRNFLKKVTAAGIGAAGLAVTDQAMA. NAD(+)-binding positions include 62-63, Asp84, 133-136, 154-155, and Asn183; these read SR, WEWH, and EV. Position 212 (Tyr212) interacts with substrate. An NAD(+)-binding site is contributed by 243–247; the sequence is AEAQW. Substrate is bound by residues Arg248, 260–263, and Tyr342; that span reads YPTH. Tyr260 contributes to the NAD(+) binding site.

It belongs to the Gfo/Idh/MocA family. Glycosyl hydrolase 109 subfamily. NAD(+) serves as cofactor. In terms of processing, predicted to be exported by the Tat system. The position of the signal peptide cleavage has not been experimentally proven.

The catalysed reaction is Cleavage of non-reducing alpha-(1-&gt;3)-N-acetylgalactosamine residues from human blood group A and AB mucin glycoproteins, Forssman hapten and blood group A lacto series glycolipids.. Glycosidase that has specific alpha-N-acetylgalactosaminidase activity. In Tannerella forsythia (Bacteroides forsythus), this protein is Alpha-N-acetylgalactosaminidase (nagA).